The following is a 541-amino-acid chain: AT-rich interactive domain-containing protein 3A (541 aa).

The interval 17–172 (RLQQELEARQ…KHPNPQAFPT (156 aa)) is disordered. Low complexity predominate over residues 55-73 (LKIQRAQAAALAAMRAAAA). Acidic residues predominate over residues 84–102 (SDEEEEDGESMASDEEDEK). Residues 103–112 (ERDGESERYP) show a composition bias toward basic and acidic residues. The segment covering 115–144 (GSEEEDLKGKWDEDDFEDEGEEDDYEDMEE) has biased composition (acidic residues). An ARID domain is found at 212-304 (DPKRKEFLDD…YLYPYECEKR (93 aa)). Residues 407–501 (AALEQLREKL…GVLFAQPPTS (95 aa)) form the REKLES domain. Residues 408 to 450 (ALEQLREKLESGEPPEKKMALGTEEQQRLQRAIQHNLLAMTAQ) are important for nuclear localization. The interval 452-473 (PMNIRINSQAEGRQDSAVNLTT) is homodimerization. Positions 497 to 504 (QPPTSASG) are important for cytoplasmic localization. A disordered region spans residues 499 to 541 (PTSASGTSKGSSNRTGSIGGGSSTSQAAPPPAPSAPTSNNPSP).

As to quaternary structure, homodimer.

It is found in the nucleus. It localises to the cytoplasm. Functionally, transcription factor required for smad1 and smad2-mediated responses to TGFbeta during mesoderm induction. This chain is AT-rich interactive domain-containing protein 3A (arid3a), found in Xenopus tropicalis (Western clawed frog).